The sequence spans 174 residues: uncharacterized protein (174 aa).

This sequence to E.coli HemX C-terminal region.

This is an uncharacterized protein from Haemophilus influenzae (strain ATCC 51907 / DSM 11121 / KW20 / Rd).